A 365-amino-acid polypeptide reads, in one-letter code: Pituitary-specific positive transcription factor 1 (365 aa).

The 9aaTAD signature appears at 5–12 (AFSADSFT). Positions 160-191 (PAVLSEEPPLGGTKDLRLRSRPPDDPPDMDSP) are disordered. Basic and acidic residues predominate over residues 173–183 (KDLRLRSRPPD). The POU-specific domain occupies 188–262 (MDSPQIRELE…ILAKWLDEAE (75 aa)). The homeobox DNA-binding region spans 278-337 (KRKRRTTISLGAKEALERSFREKIKPSSQEIVRMAEGLHLEKEVVRVWFCNRRQREKRVK).

This sequence belongs to the POU transcription factor family. Class-1 subfamily.

It localises to the nucleus. In terms of biological role, transcription factor that activates growth hormone and prolactin genes. Specifically binds to the consensus sequence 5'-TAAAT-3'. In Oncorhynchus keta (Chum salmon), this protein is Pituitary-specific positive transcription factor 1 (pou1f1).